The primary structure comprises 217 residues: MRIIMLGAPGAGKGTQAQFITERFEIPQISTGDMLRAAVKAESELGLQVKEVMASGGLVSDDIIIALIEERIQQPDCKNGFLLDGFPRTIPQAEALKDQGIAIDYVVEISVEDEEIVSRLSGRRVHEGSGRIYHVKYDPPKVEGKDDETGEALIQREDDKEETVRKRLKIYHEQTAPLVGFYQSWAEKAPADAPRYVRVEGVGSLDSIRDQILSQLK.

10-15 (GAGKGT) provides a ligand contact to ATP. Residues 30-59 (STGDMLRAAVKAESELGLQVKEVMASGGLV) are NMP. AMP is bound by residues Thr31, Arg36, 57–59 (GLV), 85–88 (GFPR), and Gln92. The segment at 122-159 (GRRVHEGSGRIYHVKYDPPKVEGKDDETGEALIQREDD) is LID. Residues Arg123 and 132-133 (IY) contribute to the ATP site. Arg156 and Arg167 together coordinate AMP. Gly203 is an ATP binding site.

The protein belongs to the adenylate kinase family. In terms of assembly, monomer.

It localises to the cytoplasm. It carries out the reaction AMP + ATP = 2 ADP. The protein operates within purine metabolism; AMP biosynthesis via salvage pathway; AMP from ADP: step 1/1. In terms of biological role, catalyzes the reversible transfer of the terminal phosphate group between ATP and AMP. Plays an important role in cellular energy homeostasis and in adenine nucleotide metabolism. The sequence is that of Adenylate kinase from Marinobacter nauticus (strain ATCC 700491 / DSM 11845 / VT8) (Marinobacter aquaeolei).